Consider the following 1384-residue polypeptide: DNA-directed RNA polymerase subunit beta (1384 aa).

Belongs to the RNA polymerase beta chain family. In terms of assembly, the RNAP catalytic core consists of 2 alpha, 1 beta, 1 beta' and 1 omega subunit. When a sigma factor is associated with the core the holoenzyme is formed, which can initiate transcription.

It carries out the reaction RNA(n) + a ribonucleoside 5'-triphosphate = RNA(n+1) + diphosphate. Functionally, DNA-dependent RNA polymerase catalyzes the transcription of DNA into RNA using the four ribonucleoside triphosphates as substrates. This Stenotrophomonas maltophilia (strain R551-3) protein is DNA-directed RNA polymerase subunit beta.